Consider the following 577-residue polypeptide: Hemagglutinin-neuraminidase (577 aa).

At Met-1–Arg-22 the chain is on the intravirion side. Residues Leu-23 to Val-45 traverse the membrane as a helical segment. Over Tyr-46–Val-571 the chain is Virion surface. N-linked (GlcNAc...) asparagine; by host glycosylation is found at Asn-119 and Asn-144. Residues Gly-124–Tyr-152 form an important for interaction with fusion/F protein region. Cystine bridges form between Cys-172–Cys-196, Cys-186–Cys-247, and Cys-238–Cys-251. The tract at residues Asn-234 to Ser-239 is involved in neuraminidase activity. Asn-341 and Asn-433 each carry an N-linked (GlcNAc...) asparagine; by host glycan. 2 cysteine pairs are disulfide-bonded: Cys-344-Cys-461 and Cys-455-Cys-465. Residues Asn-481 and Asn-538 are each glycosylated (N-linked (GlcNAc...) asparagine; by host). The cysteines at positions 531 and 542 are disulfide-linked.

The protein belongs to the paramyxoviruses hemagglutinin-neuraminidase family. As to quaternary structure, homotetramer; composed of disulfide-linked homodimers. Interacts with F protein trimer. Interacts with host CG-1B; this interaction inhibits viral adsorption and replication rather than internalization.

The protein resides in the virion membrane. The protein localises to the host cell membrane. It catalyses the reaction Hydrolysis of alpha-(2-&gt;3)-, alpha-(2-&gt;6)-, alpha-(2-&gt;8)- glycosidic linkages of terminal sialic acid residues in oligosaccharides, glycoproteins, glycolipids, colominic acid and synthetic substrates.. Mediates the viral entry into the host cell together with fusion/F protein. Attaches the virus to sialic acid-containing cell receptors and thereby initiates infection. Binding of HN protein to the receptor induces a conformational change that allows the F protein to trigger virion/cell membranes fusion. In terms of biological role, neuraminidase activity ensures the efficient spread of the virus by dissociating the mature virions from the neuraminic acid containing glycoproteins. The sequence is that of Hemagglutinin-neuraminidase (HN) from Gallus gallus (Chicken).